Reading from the N-terminus, the 260-residue chain is Proteasome subunit alpha (260 aa).

The protein belongs to the peptidase T1A family. In terms of assembly, the 20S proteasome core is composed of 14 alpha and 14 beta subunits that assemble into four stacked heptameric rings, resulting in a barrel-shaped structure. The two inner rings, each composed of seven catalytic beta subunits, are sandwiched by two outer rings, each composed of seven alpha subunits. The catalytic chamber with the active sites is on the inside of the barrel. Has a gated structure, the ends of the cylinder being occluded by the N-termini of the alpha-subunits. Is capped at one or both ends by the proteasome regulatory ATPase, PAN.

The protein localises to the cytoplasm. The formation of the proteasomal ATPase PAN-20S proteasome complex, via the docking of the C-termini of PAN into the intersubunit pockets in the alpha-rings, triggers opening of the gate for substrate entry. Interconversion between the open-gate and close-gate conformations leads to a dynamic regulation of the 20S proteasome proteolysis activity. In terms of biological role, component of the proteasome core, a large protease complex with broad specificity involved in protein degradation. In Thermococcus gammatolerans (strain DSM 15229 / JCM 11827 / EJ3), this protein is Proteasome subunit alpha.